Consider the following 402-residue polypeptide: uncharacterized protein (402 aa).

A signal peptide spans 1 to 44 (MLEKNLLPEILLAIHMPLNKGLTRVKAIVIIIVVIIAVIAGVVG). The disordered stretch occupies residues 53–79 (NSVTTSSSSTTTSSSLSSTSISSSTTN).

This sequence belongs to the bacterial solute-binding protein 1 family. WtpA subfamily.

This is an uncharacterized protein from Saccharolobus solfataricus (strain ATCC 35092 / DSM 1617 / JCM 11322 / P2) (Sulfolobus solfataricus).